Reading from the N-terminus, the 203-residue chain is Gramillins biosynthetic cluster protein FGSG_00038 (203 aa).

The protein operates within mycotoxin biosynthesis. In terms of biological role, part of the gene cluster that mediates the biosynthesis of gramillins A and B, bicyclic lipopeptides that induce cell death in maize leaves but not in wheat leaves. The nonribosomal peptide synthetase GRA1 incorporates respectively a glutamic adic (Glu), a leucine (Leu), a serine (Ser), a hydroxyglutamine (HOGln), a 2-amino decanoic acid, and 2 cysteins (CysB and CysA). The biosynthesis of 2-amino decanoic acid incorporated in gramillins could be initiated by a fatty acid synthase composed of the alpha and beta subunits FGSG_00036 and FGSG_11656. The cytochrome P450 monooxygenase FGSG_15680 could hydroxylate the fatty acid chain. Subsequent oxidation to the ketone by the oxidoreductase FGSG_00048 and transamination by aminotransferase FGSG_00049 could form 2-amino-decanoic acid. On the other hand, FGSG_15680 could also be responsible for the HO-modified glutamine at the gamma-position. Whether hydroxylation occurs on the fully assembled product or on the Gln residue prior to assembly into the gramillins requires further proof. The thioredoxin FGSG_00043 could also be required for the disulfide-bond formation between CysA and CysB. The specific involvement of the remaining proteins from the cluster is more difficult to discern, but could have broader regulatory (FGSG_00040 and FGSG_11657) or enzymatic functions (FGSG_00044 and FGSG_00045). The final C-domain of GRA1 does not possess the expected sequence of a termination CT domain, often implicated in macrocyclization and release of a cyclopeptidein fungal NRPs; and the thioesterase FGSG_00047 may act in concert with the terminal C-domain of GRA1 to catalyze the formation of the macrocyclic anhydride and release of the products. The chain is Gramillins biosynthetic cluster protein FGSG_00038 from Gibberella zeae (strain ATCC MYA-4620 / CBS 123657 / FGSC 9075 / NRRL 31084 / PH-1) (Wheat head blight fungus).